A 374-amino-acid chain; its full sequence is Cell division protein C (374 aa).

Residues Ala-11–Glu-73 form the MIT domain. Residue Gly-144–Thr-151 participates in ATP binding.

The protein belongs to the AAA ATPase family. Interacts with CdvB.

Its subcellular location is the cytoplasm. The protein localises to the nucleoid. Part of a cell division machinery. The CdvA, CdvB and CdvC proteins polymerize between segregating nucleoids and persist throughout cell division, forming a successively smaller structure during constriction. In Sulfolobus acidocaldarius (strain ATCC 33909 / DSM 639 / JCM 8929 / NBRC 15157 / NCIMB 11770), this protein is Cell division protein C.